Here is a 287-residue protein sequence, read N- to C-terminus: MPELPEVETVRQGLAQWVTDRRIAEVQVLHPRAVRRHAAGAAHFADVLRETTVRDVRRRGKYLWLPLDSGDAVVGHLGMSGQLLLQPAAAPDETHLRVRFRFADDGPELRFVDQRTFGGLSVSAGGAELPTEIAHIARDPLDPEFSDATFVAALRRRRTEIKRALLDQTLLSGVGNIYADEALWRARLHGTRPTDGLTGPAVLRLLGHVRDVLGEAVKEGGTSFDALYVNVNGESGYFDRALNVYGRADQPCRRCGEPVRREAFMNRSSFSCPRCQPRPRRAVPARG.

Pro-2 acts as the Schiff-base intermediate with DNA in catalysis. The active-site Proton donor is Glu-3. The Proton donor; for beta-elimination activity role is filled by Lys-61. The DNA site is built by His-95, Arg-115, and Arg-157. An FPG-type zinc finger spans residues 243-277 (NVYGRADQPCRRCGEPVRREAFMNRSSFSCPRCQP). Residue Arg-267 is the Proton donor; for delta-elimination activity of the active site.

It belongs to the FPG family. Monomer. Zn(2+) is required as a cofactor.

The catalysed reaction is Hydrolysis of DNA containing ring-opened 7-methylguanine residues, releasing 2,6-diamino-4-hydroxy-5-(N-methyl)formamidopyrimidine.. It catalyses the reaction 2'-deoxyribonucleotide-(2'-deoxyribose 5'-phosphate)-2'-deoxyribonucleotide-DNA = a 3'-end 2'-deoxyribonucleotide-(2,3-dehydro-2,3-deoxyribose 5'-phosphate)-DNA + a 5'-end 5'-phospho-2'-deoxyribonucleoside-DNA + H(+). Its function is as follows. Involved in base excision repair of DNA damaged by oxidation or by mutagenic agents. Acts as a DNA glycosylase that recognizes and removes damaged bases. Has a preference for oxidized purines, such as 7,8-dihydro-8-oxoguanine (8-oxoG). Has AP (apurinic/apyrimidinic) lyase activity and introduces nicks in the DNA strand. Cleaves the DNA backbone by beta-delta elimination to generate a single-strand break at the site of the removed base with both 3'- and 5'-phosphates. The protein is Formamidopyrimidine-DNA glycosylase of Salinispora tropica (strain ATCC BAA-916 / DSM 44818 / JCM 13857 / NBRC 105044 / CNB-440).